A 436-amino-acid polypeptide reads, in one-letter code: Glutamate-1-semialdehyde 2,1-aminomutase (436 aa).

The residue at position 276 (lysine 276) is an N6-(pyridoxal phosphate)lysine.

Belongs to the class-III pyridoxal-phosphate-dependent aminotransferase family. HemL subfamily. As to quaternary structure, homodimer. Pyridoxal 5'-phosphate serves as cofactor.

The protein resides in the cytoplasm. The catalysed reaction is (S)-4-amino-5-oxopentanoate = 5-aminolevulinate. It participates in porphyrin-containing compound metabolism; protoporphyrin-IX biosynthesis; 5-aminolevulinate from L-glutamyl-tRNA(Glu): step 2/2. Its pathway is porphyrin-containing compound metabolism; chlorophyll biosynthesis. This Synechococcus sp. (strain JA-2-3B'a(2-13)) (Cyanobacteria bacterium Yellowstone B-Prime) protein is Glutamate-1-semialdehyde 2,1-aminomutase.